Reading from the N-terminus, the 490-residue chain is Polyamine oxidase 2 (490 aa).

The FAD site is built by Glu57, Arg65, Val246, and Glu433. The Microbody targeting signal signature appears at Ser488–Leu490.

Belongs to the flavin monoamine oxidase family. The cofactor is FAD. In terms of tissue distribution, highly expressed in flowers and siliques. Also found in leaf and stem and in low levels in cotyledons, roots and in seedlings.

The protein resides in the peroxisome. It catalyses the reaction spermine + O2 + H2O = 3-aminopropanal + spermidine + H2O2. It carries out the reaction N(1)-acetylspermine + O2 + H2O = 3-acetamidopropanal + spermidine + H2O2. The enzyme catalyses spermidine + O2 + H2O = 3-aminopropanal + putrescine + H2O2. It participates in amine and polyamine degradation; spermine degradation. Its pathway is amine and polyamine degradation; spermidine degradation. In terms of biological role, flavoenzyme involved in polyamine back-conversion. Catalyzes the oxidation of the secondary amino group of polyamines, such as spermine, spermidine and their acetyl derivatives. Substrate preference is N(1)-acetylspermine &gt; spermine &gt; spermidine. Plays an important role in the regulation of polyamine intracellular concentration. Involved in abscisic acid-mediated developmental processes. May contribute to nitric oxide-mediated effects on root growth. The chain is Polyamine oxidase 2 from Arabidopsis thaliana (Mouse-ear cress).